Consider the following 449-residue polypeptide: Ribulose bisphosphate carboxylase large chain (449 aa).

Positions 1–2 (MS) are excised as a propeptide. Position 3 is an N-acetylproline (proline 3). Lysine 14 carries the post-translational modification N6,N6,N6-trimethyllysine. Residues asparagine 123 and threonine 173 each contribute to the substrate site. Residue lysine 175 is the Proton acceptor of the active site. Lysine 177 is a substrate binding site. Lysine 201, aspartate 203, and glutamate 204 together coordinate Mg(2+). Lysine 201 bears the N6-carboxylysine mark. Histidine 294 serves as the catalytic Proton acceptor. Residue 295, histidine 327, and serine 379 together coordinate substrate.

Belongs to the RuBisCO large chain family. Type I subfamily. As to quaternary structure, heterohexadecamer of 8 large chains and 8 small chains; disulfide-linked. The disulfide link is formed within the large subunit homodimers. The cofactor is Mg(2+). In terms of processing, the disulfide bond which can form in the large chain dimeric partners within the hexadecamer appears to be associated with oxidative stress and protein turnover.

It is found in the plastid. It localises to the chloroplast. It catalyses the reaction 2 (2R)-3-phosphoglycerate + 2 H(+) = D-ribulose 1,5-bisphosphate + CO2 + H2O. It carries out the reaction D-ribulose 1,5-bisphosphate + O2 = 2-phosphoglycolate + (2R)-3-phosphoglycerate + 2 H(+). In terms of biological role, ruBisCO catalyzes two reactions: the carboxylation of D-ribulose 1,5-bisphosphate, the primary event in carbon dioxide fixation, as well as the oxidative fragmentation of the pentose substrate in the photorespiration process. Both reactions occur simultaneously and in competition at the same active site. The protein is Ribulose bisphosphate carboxylase large chain of Salacia pallescens.